Consider the following 255-residue polypeptide: MTMALYWQVSGQGQDLVLVHGWGMNGAVWQQTAQALSDHFRVHVVDLPGYGHSAEQHAASLEEIAQALLEHAPRNAIWVGWSLGGLVATHMALHHSDYVSKLVTVASSPKFAAQGSWRGIQPDVLTAFTDQLVADFQLTIERFMALQAMGSPSARQDVKVLKQAVLSRPMPNPQSLLAGLTMLAEVDLRDELQHISVPMLRLYGRLDGLVPAKVARDLNHLAPYSEAFMFDQSSHAPFMTEAEAFCQQLIEFATR.

Positions 16–241 constitute an AB hydrolase-1 domain; that stretch reads LVLVHGWGMN…QSSHAPFMTE (226 aa). Substrate contacts are provided by residues tryptophan 22, 82-83, and 143-147; these read SL and FMALQ. The Nucleophile role is filled by serine 82. Residues aspartate 207 and histidine 235 contribute to the active site. Histidine 235 contributes to the substrate binding site.

It belongs to the AB hydrolase superfamily. Carboxylesterase BioH family. Monomer.

The protein localises to the cytoplasm. The enzyme catalyses 6-carboxyhexanoyl-[ACP] methyl ester + H2O = 6-carboxyhexanoyl-[ACP] + methanol + H(+). Its pathway is cofactor biosynthesis; biotin biosynthesis. In terms of biological role, the physiological role of BioH is to remove the methyl group introduced by BioC when the pimeloyl moiety is complete. It allows to synthesize pimeloyl-ACP via the fatty acid synthetic pathway through the hydrolysis of the ester bonds of pimeloyl-ACP esters. The polypeptide is Pimeloyl-[acyl-carrier protein] methyl ester esterase (Vibrio cholerae serotype O1 (strain ATCC 39315 / El Tor Inaba N16961)).